A 564-amino-acid polypeptide reads, in one-letter code: Septin-9 (564 aa).

An N-acetylmethionine modification is found at Met-1. Phosphoserine is present on Ser-12. A phosphothreonine mark is found at Thr-24 and Thr-31. Disordered stretches follow at residues 38-165 and 178-224; these read VASS…PVTD and PAEA…DSEV. Residue Lys-44 is modified to N6-acetyllysine. Phosphoserine occurs at positions 64, 67, and 71. Positions 95 to 109 are enriched in polar residues; sequence DISSKQVESTASTPG. Positions 116–134 are enriched in basic and acidic residues; it reads KRAEVLGHKTPEPVPRRTE. A Phosphothreonine modification is found at Thr-125. Positions 190–203 are enriched in polar residues; the sequence is TLENSEAPMSQLQS. At Tyr-258 the chain carries Phosphotyrosine. The Septin-type G domain occupies 275–546; sequence QGFEFNIMVV…EAYRVKRLNE (272 aa). The segment at 285-292 is G1 motif; that stretch reads GQSGLGKS. Residue 285-292 coordinates GTP; it reads GQSGLGKS. Ser-307 and Ser-312 each carry phosphoserine. Residues Thr-319, Gly-345, 425-433, Gly-480, and Arg-495 contribute to the GTP site; that span reads KADTLTLEE. The segment at 342–345 is G3 motif; sequence DTPG. Residues 424–427 are G4 motif; it reads AKAD.

This sequence belongs to the TRAFAC class TrmE-Era-EngA-EngB-Septin-like GTPase superfamily. Septin GTPase family. Septins polymerize into heterooligomeric protein complexes that form filaments, and associate with cellular membranes, actin filaments, and microtubules. GTPase activity is required for filament formation. Interacts with SEPTIN2, SEPTIN6, SEPTIN7, SEPTIN11 and SEPTIN14. Interacts with RTKN and ARHGEF18. In terms of tissue distribution, expressed in the brain, mainly in the perikarya and processes of astrocytes in the cerebellum, dentate gyrus and corpus callosum (at protein level). In the sciatic nerve, highly expressed in Schwann cells (at protein level). Isoforms are differentially expressed in testes, kidney, liver, heart, spleen and brain. Undetectable in skeletal muscle.

The protein resides in the cytoplasm. It localises to the cytoskeleton. Functionally, filament-forming cytoskeletal GTPase. May play a role in cytokinesis (Potential). The protein is Septin-9 of Rattus norvegicus (Rat).